The primary structure comprises 268 residues: Phosphatidylglycerol--prolipoprotein diacylglyceryl transferase (268 aa).

Helical transmembrane passes span 23-43 (IGLR…RWLA), 62-82 (LLFN…VFFY), 97-117 (VWEG…AMIW), 132-152 (FVAP…FINL), 179-199 (SQLY…NIFI), 206-226 (ASVA…VEYV), and 241-261 (GQAL…WAYS). Arg145 serves as a coordination point for a 1,2-diacyl-sn-glycero-3-phospho-(1'-sn-glycerol).

It belongs to the Lgt family.

Its subcellular location is the cell inner membrane. The enzyme catalyses L-cysteinyl-[prolipoprotein] + a 1,2-diacyl-sn-glycero-3-phospho-(1'-sn-glycerol) = an S-1,2-diacyl-sn-glyceryl-L-cysteinyl-[prolipoprotein] + sn-glycerol 1-phosphate + H(+). It functions in the pathway protein modification; lipoprotein biosynthesis (diacylglyceryl transfer). Catalyzes the transfer of the diacylglyceryl group from phosphatidylglycerol to the sulfhydryl group of the N-terminal cysteine of a prolipoprotein, the first step in the formation of mature lipoproteins. The protein is Phosphatidylglycerol--prolipoprotein diacylglyceryl transferase of Haemophilus influenzae (strain PittEE).